The chain runs to 246 residues: 1-(5-phosphoribosyl)-5-[(5-phosphoribosylamino)methylideneamino] imidazole-4-carboxamide isomerase (246 aa).

Asp-8 functions as the Proton acceptor in the catalytic mechanism. Catalysis depends on Asp-131, which acts as the Proton donor.

This sequence belongs to the HisA/HisF family.

The protein resides in the cytoplasm. The catalysed reaction is 1-(5-phospho-beta-D-ribosyl)-5-[(5-phospho-beta-D-ribosylamino)methylideneamino]imidazole-4-carboxamide = 5-[(5-phospho-1-deoxy-D-ribulos-1-ylimino)methylamino]-1-(5-phospho-beta-D-ribosyl)imidazole-4-carboxamide. Its pathway is amino-acid biosynthesis; L-histidine biosynthesis; L-histidine from 5-phospho-alpha-D-ribose 1-diphosphate: step 4/9. The chain is 1-(5-phosphoribosyl)-5-[(5-phosphoribosylamino)methylideneamino] imidazole-4-carboxamide isomerase from Chromobacterium violaceum (strain ATCC 12472 / DSM 30191 / JCM 1249 / CCUG 213 / NBRC 12614 / NCIMB 9131 / NCTC 9757 / MK).